Here is a 273-residue protein sequence, read N- to C-terminus: MAHPIPVVVNGATGKMGRETIKAIAAADDVTLVGAIARSADVQGQDIGEIVGLGPLEVPVTNDLEGMLCLASQEREVPVVVDFTHPDCIYDNVRKAIAYGVRPVVGTTGLNNEQLQELAEFAEKASVGCLVIPNFSIGMVLLMQAAIQASRFYDHVEILELHHDQKADAPSGTAIKTAQMLAELGKTFNPPKVTEKETMPGARGAVGPENIRIHSVRLPGLIAHEEVIFGAPGEILTLRHDTMDRSCYMPGVLLAVRKVRQLTGLIYGLDRIP.

NAD(+)-binding positions include 11 to 16 and 106 to 108; these read GATGKM and GTT. The Proton donor/acceptor role is filled by histidine 162. (S)-2,3,4,5-tetrahydrodipicolinate is bound at residue histidine 163. Lysine 166 (proton donor) is an active-site residue. Residue 172–173 participates in (S)-2,3,4,5-tetrahydrodipicolinate binding; the sequence is GT.

It belongs to the DapB family.

It is found in the cytoplasm. It carries out the reaction (S)-2,3,4,5-tetrahydrodipicolinate + NAD(+) + H2O = (2S,4S)-4-hydroxy-2,3,4,5-tetrahydrodipicolinate + NADH + H(+). The catalysed reaction is (S)-2,3,4,5-tetrahydrodipicolinate + NADP(+) + H2O = (2S,4S)-4-hydroxy-2,3,4,5-tetrahydrodipicolinate + NADPH + H(+). It functions in the pathway amino-acid biosynthesis; L-lysine biosynthesis via DAP pathway; (S)-tetrahydrodipicolinate from L-aspartate: step 4/4. Catalyzes the conversion of 4-hydroxy-tetrahydrodipicolinate (HTPA) to tetrahydrodipicolinate. This chain is 4-hydroxy-tetrahydrodipicolinate reductase, found in Synechococcus sp. (strain ATCC 27144 / PCC 6301 / SAUG 1402/1) (Anacystis nidulans).